A 549-amino-acid polypeptide reads, in one-letter code: Probable serine/threonine-protein kinase WNK5 (549 aa).

One can recognise a Protein kinase domain in the interval 25-283 (GRFREVLGKG…AKELLADPFL (259 aa)). ATP is bound by residues 105 to 108 (TELF) and K155. D172 acts as the Proton acceptor in catalysis. Positions 414 to 490 (ESFGHEDDED…SPAIDDDQNQ (77 aa)) are disordered. Residues 452–463 (DDSSNDVIPDMD) show a composition bias toward acidic residues. Residues 467-476 (RSSNRLLNSS) are compositionally biased toward low complexity. S504 is subject to Phosphoserine. The disordered stretch occupies residues 525-549 (RGRGFDPNTNELQPQPSSTDFIRRC). Positions 531–549 (PNTNELQPQPSSTDFIRRC) are enriched in polar residues.

Belongs to the protein kinase superfamily. Ser/Thr protein kinase family. WNK subfamily. In terms of assembly, interacts with AHK4.

It catalyses the reaction L-seryl-[protein] + ATP = O-phospho-L-seryl-[protein] + ADP + H(+). The enzyme catalyses L-threonyl-[protein] + ATP = O-phospho-L-threonyl-[protein] + ADP + H(+). In terms of biological role, regulates flowering time by modulating the photoperiod pathway. This Arabidopsis thaliana (Mouse-ear cress) protein is Probable serine/threonine-protein kinase WNK5 (WNK5).